The chain runs to 286 residues: S-adenosylmethionine-dependent methyltransferase UmaA (286 aa).

Residues 32-33, 67-75, 93-98, and 122-123 contribute to the S-adenosyl-L-methionine site; these read YT, LLDIGCGWG, TLSRNQ, and WD. The active site involves cysteine 268.

This sequence belongs to the CFA/CMAS family.

The protein localises to the cytoplasm. Methyltransferase that modifies short-chain fatty acids. In vitro, catalyzes the transfer of the methyl group from S-adenosyl-L-methionine (SAM) to the double bond of phospholipid-linked oleic acid to produce tuberculostearic acid (10-methylstearic-acid or TSA). The sequence is that of S-adenosylmethionine-dependent methyltransferase UmaA from Mycobacterium tuberculosis (strain ATCC 25618 / H37Rv).